A 3603-amino-acid chain; its full sequence is Plipastatin synthase subunit D (3603 aa).

A condensation 1 region spans residues 7–306 (IQDIYPLSYM…NTMPVRVQGA (300 aa)). Residues 7–1043 (IQDIYPLSYM…ALIIREAEQN (1037 aa)) form a domain 1 (proline-activating) region. The interval 490-889 (TYRELNKAAN…NHPDISEAAI (400 aa)) is adenylation 1. A Carrier 1 domain is found at 966-1041 (APRNLLEAKL…GLALIIREAE (76 aa)). Residue serine 1001 is modified to O-(pantetheine 4'-phosphoryl)serine. Residues 1053–1334 (KRDTYPVSSA…NTLALRTRPA (282 aa)) form a condensation 2 region. Positions 1053–2069 (KRDTYPVSSA…TVEGLATVIR (1017 aa)) are domain 2 (glutamine-activating). The tract at residues 1521–1924 (TYKELNEQAN…SIEGVREAAV (404 aa)) is adenylation 2. The Carrier 2 domain occupies 1997 to 2072 (APRNVTEMKL…GLATVIREGT (76 aa)). Residue serine 2032 is modified to O-(pantetheine 4'-phosphoryl)serine. The interval 2084-2374 (KQETYPVSSA…NTLALRTRPE (291 aa)) is condensation 3. Residues 2084–3596 (KQETYPVSSA…ELTEDALQEI (1513 aa)) form a domain 3 (proline-activating) region. Positions 2560–2956 (TYQELDEWSN…CIKGVKDAAV (397 aa)) are adenylation 3. A Carrier 3 domain is found at 3034-3108 (PPSSKMEQIL…ELAAYIRDSD (75 aa)). Serine 3069 carries the post-translational modification O-(pantetheine 4'-phosphoryl)serine. An epimerization region spans residues 3116–3596 (VEGDVQWSPV…ELTEDALQEI (481 aa)).

The protein belongs to the ATP-dependent AMP-binding enzyme family. Pantetheine 4'-phosphate is required as a cofactor.

This protein is a multifunctional enzyme, able to activate and polymerize the amino acids Pro, Gln and Tyr as part of the biosynthesis of the lipopeptide antibiotic plipastatin. The Tyr residue is further epimerized to the D-isomer form. The activation sites for these amino acids consist of individual domains. The chain is Plipastatin synthase subunit D (ppsD) from Bacillus subtilis (strain 168).